Here is a 292-residue protein sequence, read N- to C-terminus: Probable endonuclease 4 (292 aa).

The Zn(2+) site is built by His69, His109, Glu145, Asp179, His182, His216, Asp229, His231, and Glu261.

This sequence belongs to the AP endonuclease 2 family. Requires Zn(2+) as cofactor.

It catalyses the reaction Endonucleolytic cleavage to 5'-phosphooligonucleotide end-products.. Endonuclease IV plays a role in DNA repair. It cleaves phosphodiester bonds at apurinic or apyrimidinic (AP) sites, generating a 3'-hydroxyl group and a 5'-terminal sugar phosphate. The sequence is that of Probable endonuclease 4 from Desulfotalea psychrophila (strain LSv54 / DSM 12343).